A 330-amino-acid chain; its full sequence is Ketol-acid reductoisomerase (NADP(+)) (330 aa).

Positions 2–182 (VEIYYDDDAS…GGTRAGALRT (181 aa)) constitute a KARI N-terminal Rossmann domain. NADP(+) contacts are provided by residues 25 to 28 (YGSQ), serine 51, and serine 53. The active site involves histidine 108. Residue glycine 134 coordinates NADP(+). The KARI C-terminal knotted domain occupies 183–328 (TFTEETETDL…AKLRPLMSWI (146 aa)). 4 residues coordinate Mg(2+): aspartate 191, glutamate 195, glutamate 227, and glutamate 231. Residue serine 252 participates in substrate binding.

It belongs to the ketol-acid reductoisomerase family. The cofactor is Mg(2+).

It carries out the reaction (2R)-2,3-dihydroxy-3-methylbutanoate + NADP(+) = (2S)-2-acetolactate + NADPH + H(+). The catalysed reaction is (2R,3R)-2,3-dihydroxy-3-methylpentanoate + NADP(+) = (S)-2-ethyl-2-hydroxy-3-oxobutanoate + NADPH + H(+). It functions in the pathway amino-acid biosynthesis; L-isoleucine biosynthesis; L-isoleucine from 2-oxobutanoate: step 2/4. It participates in amino-acid biosynthesis; L-valine biosynthesis; L-valine from pyruvate: step 2/4. Involved in the biosynthesis of branched-chain amino acids (BCAA). Catalyzes an alkyl-migration followed by a ketol-acid reduction of (S)-2-acetolactate (S2AL) to yield (R)-2,3-dihydroxy-isovalerate. In the isomerase reaction, S2AL is rearranged via a Mg-dependent methyl migration to produce 3-hydroxy-3-methyl-2-ketobutyrate (HMKB). In the reductase reaction, this 2-ketoacid undergoes a metal-dependent reduction by NADPH to yield (R)-2,3-dihydroxy-isovalerate. The protein is Ketol-acid reductoisomerase (NADP(+)) of Frankia alni (strain DSM 45986 / CECT 9034 / ACN14a).